Here is a 141-residue protein sequence, read N- to C-terminus: Galactose-6-phosphate isomerase subunit LacA 1 (141 aa).

It belongs to the LacAB/RpiB family. In terms of assembly, heteromultimeric protein consisting of LacA and LacB.

It catalyses the reaction aldehydo-D-galactose 6-phosphate = keto-D-tagatose 6-phosphate. It participates in carbohydrate metabolism; D-galactose 6-phosphate degradation; D-tagatose 6-phosphate from D-galactose 6-phosphate: step 1/1. In Streptococcus pyogenes serotype M6 (strain ATCC BAA-946 / MGAS10394), this protein is Galactose-6-phosphate isomerase subunit LacA 1.